Consider the following 58-residue polypeptide: uncharacterized protein (58 aa).

Helical transmembrane passes span isoleucine 7 to threonine 27 and tyrosine 29 to isoleucine 49.

Its subcellular location is the cell membrane. This is an uncharacterized protein from Bacillus subtilis (strain 168).